Consider the following 110-residue polypeptide: Iron-sulfur cluster assembly protein CyaY (110 aa).

The protein belongs to the frataxin family.

In terms of biological role, involved in iron-sulfur (Fe-S) cluster assembly. May act as a regulator of Fe-S biogenesis. This Ectopseudomonas mendocina (strain ymp) (Pseudomonas mendocina) protein is Iron-sulfur cluster assembly protein CyaY.